A 187-amino-acid chain; its full sequence is Peptidyl-tRNA hydrolase (187 aa).

Y18 is a tRNA binding site. Residue H23 is the Proton acceptor of the active site. Residues F65, N67, and N113 each coordinate tRNA.

Belongs to the PTH family. Monomer.

It localises to the cytoplasm. The catalysed reaction is an N-acyl-L-alpha-aminoacyl-tRNA + H2O = an N-acyl-L-amino acid + a tRNA + H(+). Hydrolyzes ribosome-free peptidyl-tRNAs (with 1 or more amino acids incorporated), which drop off the ribosome during protein synthesis, or as a result of ribosome stalling. Functionally, catalyzes the release of premature peptidyl moieties from peptidyl-tRNA molecules trapped in stalled 50S ribosomal subunits, and thus maintains levels of free tRNAs and 50S ribosomes. In Coxiella burnetii (strain CbuK_Q154) (Coxiella burnetii (strain Q154)), this protein is Peptidyl-tRNA hydrolase.